A 138-amino-acid polypeptide reads, in one-letter code: Type II secretion system protein I (138 aa).

A propeptide spans 1-6 (MKHQRG) (leader sequence). Residue Tyr7 is modified to N-methyltyrosine. Residues 7–29 (YSLIEVIVAFALLALALTLLLGS) traverse the membrane as a helical segment.

It belongs to the GSP I family. As to quaternary structure, type II secretion is composed of four main components: the outer membrane complex, the inner membrane complex, the cytoplasmic secretion ATPase and the periplasm-spanning pseudopilus. Interacts with core component XpsG. Cleaved by prepilin peptidase. Post-translationally, methylated by prepilin peptidase at the amino group of the N-terminal tyrosine once the leader sequence is cleaved by prepilin peptidase.

It localises to the cell inner membrane. In terms of biological role, component of the type II secretion system required for the energy-dependent secretion of extracellular factors such as proteases and toxins from the periplasm. Part of the pseudopilus tip complex that is critical for the recognition and binding of secretion substrates. The protein is Type II secretion system protein I (xpsI) of Xanthomonas campestris pv. campestris (strain ATCC 33913 / DSM 3586 / NCPPB 528 / LMG 568 / P 25).